A 462-amino-acid polypeptide reads, in one-letter code: Tubulin gamma-1 chain (462 aa).

Position 142–148 (142–148) interacts with GTP; sequence AGGTGSG.

Belongs to the tubulin family.

It localises to the cytoplasm. Its subcellular location is the cytoskeleton. It is found in the microtubule organizing center. The protein resides in the centrosome. Its function is as follows. Tubulin is the major constituent of microtubules. The gamma chain is found at microtubule organizing centers (MTOC) such as the spindle poles or the centrosome, suggesting that it is involved in the minus-end nucleation of microtubule assembly. This is Tubulin gamma-1 chain from Euplotes crassus.